An 89-amino-acid polypeptide reads, in one-letter code: Small ribosomal subunit protein bS20 (89 aa).

Positions Pro-68–Gln-89 are disordered. The span at Ser-76–Gln-89 shows a compositional bias: basic and acidic residues.

The protein belongs to the bacterial ribosomal protein bS20 family.

In terms of biological role, binds directly to 16S ribosomal RNA. This Mycoplasmopsis agalactiae (strain NCTC 10123 / CIP 59.7 / PG2) (Mycoplasma agalactiae) protein is Small ribosomal subunit protein bS20.